A 190-amino-acid chain; its full sequence is U1 small nuclear ribonucleoprotein C-1 (190 aa).

The segment at 4–36 (YYCDYCDVFLVSESPSVRKAHNSGRNHLTNVRD) adopts a Matrin-type zinc-finger fold. The disordered stretch occupies residues 57–190 (FETGGGNSTS…PDRARQLGLI (134 aa)). Pro residues predominate over residues 72–82 (GNPPGSQPGPP). The segment covering 109-124 (AMLALMNGQNGMSSPG) has biased composition (low complexity). Pro residues predominate over residues 125 to 141 (SGPPPMRFAGPPIPNNM). A compositionally biased stretch (basic and acidic residues) spans 180–190 (NPDRARQLGLI).

This sequence belongs to the U1 small nuclear ribonucleoprotein C family. In terms of assembly, U1 snRNP is composed of the 7 core Sm proteins B/B', D1, D2, D3, E, F and G that assemble in a heptameric protein ring on the Sm site of the small nuclear RNA to form the core snRNP, and at least 3 U1 snRNP-specific proteins U1-70K, U1-A and U1-C. U1-C interacts with U1 snRNA and the 5' splice-site region of the pre-mRNA.

Its subcellular location is the nucleus. Functionally, component of the spliceosomal U1 snRNP, which is essential for recognition of the pre-mRNA 5' splice-site and the subsequent assembly of the spliceosome. U1-C is directly involved in initial 5' splice-site recognition for both constitutive and regulated alternative splicing. The interaction with the 5' splice-site seems to precede base-pairing between the pre-mRNA and the U1 snRNA. Stimulates commitment or early (E) complex formation by stabilizing the base pairing of the 5' end of the U1 snRNA and the 5' splice-site region. The polypeptide is U1 small nuclear ribonucleoprotein C-1 (Puccinia graminis f. sp. tritici (strain CRL 75-36-700-3 / race SCCL) (Black stem rust fungus)).